We begin with the raw amino-acid sequence, 375 residues long: Deoxyribonuclease-2 (375 aa).

Positions 1–21 are cleaved as a signal peptide; the sequence is MGLSPAAVLIFLLLGVSQTYA. N-linked (GlcNAc...) asparagine glycosylation is present at Asn-131.

Belongs to the DNase II family.

It carries out the reaction Endonucleolytic cleavage to nucleoside 3'-phosphates and 3'-phosphooligonucleotide end-products.. Its function is as follows. Hydrolyzes DNA under acidic conditions with a preference for double-stranded DNA. Implicated in apoptosis. The sequence is that of Deoxyribonuclease-2 (nuc-1) from Caenorhabditis elegans.